The following is a 57-amino-acid chain: MAVPKRRMSRSNTRSRRAQWKAKPTELVGVTVAGQQHKVPRRLLKAARLGLIDLDRR.

Basic residues predominate over residues 1–20; it reads MAVPKRRMSRSNTRSRRAQW. The segment at 1–22 is disordered; sequence MAVPKRRMSRSNTRSRRAQWKA.

The protein belongs to the bacterial ribosomal protein bL32 family.

This is Large ribosomal subunit protein bL32 from Mycobacterium sp. (strain JLS).